Reading from the N-terminus, the 919-residue chain is Isoleucine--tRNA ligase (919 aa).

Residues 57–67 (PYANGHIHIGT) carry the 'HIGH' region motif. Glu-553 provides a ligand contact to L-isoleucyl-5'-AMP. The 'KMSKS' region motif lies at 594-598 (KMSKS). Lys-597 is an ATP binding site. Zn(2+) contacts are provided by Cys-887, Cys-890, Cys-907, and Cys-910.

This sequence belongs to the class-I aminoacyl-tRNA synthetase family. IleS type 1 subfamily. Monomer. The cofactor is Zn(2+).

It is found in the cytoplasm. It carries out the reaction tRNA(Ile) + L-isoleucine + ATP = L-isoleucyl-tRNA(Ile) + AMP + diphosphate. Catalyzes the attachment of isoleucine to tRNA(Ile). As IleRS can inadvertently accommodate and process structurally similar amino acids such as valine, to avoid such errors it has two additional distinct tRNA(Ile)-dependent editing activities. One activity is designated as 'pretransfer' editing and involves the hydrolysis of activated Val-AMP. The other activity is designated 'posttransfer' editing and involves deacylation of mischarged Val-tRNA(Ile). This chain is Isoleucine--tRNA ligase, found in Thermotoga petrophila (strain ATCC BAA-488 / DSM 13995 / JCM 10881 / RKU-1).